We begin with the raw amino-acid sequence, 55 residues long: UPF0391 membrane protein NE1120 (55 aa).

Transmembrane regions (helical) follow at residues 4-24 (MALVFFLIAVLAGILGFAGIA) and 27-47 (LAWAAKVLFFAGLILTVVFYL).

Belongs to the UPF0391 family.

The protein resides in the cell membrane. The chain is UPF0391 membrane protein NE1120 from Nitrosomonas europaea (strain ATCC 19718 / CIP 103999 / KCTC 2705 / NBRC 14298).